The primary structure comprises 362 residues: Aspartate-semialdehyde dehydrogenase (362 aa).

Positions 15, 16, 17, 18, 40, 43, 87, and 88 each coordinate NADP(+). The active-site Acyl-thioester intermediate is the C154. Position 186 (G186) interacts with NADP(+). The Proton acceptor role is filled by H251. N340 contacts NADP(+).

It belongs to the aspartate-semialdehyde dehydrogenase family. Homotetramer; dimer of dimers.

Its subcellular location is the cytoplasm. The protein localises to the cytosol. It localises to the nucleus. It catalyses the reaction L-aspartate 4-semialdehyde + phosphate + NADP(+) = 4-phospho-L-aspartate + NADPH + H(+). It functions in the pathway amino-acid biosynthesis; L-methionine biosynthesis via de novo pathway; L-homoserine from L-aspartate: step 2/3. Its pathway is amino-acid biosynthesis; L-threonine biosynthesis; L-threonine from L-aspartate: step 2/5. In terms of biological role, catalyzes the NADPH-dependent formation of L-aspartate 4-semialdehyde (L-ASA) by the reductive dephosphorylation of 4-phospho-L-aspartate. Mediates the second step in the biosynthesis of amino acids that derive from aspartate (the aspartate family of amino acids), including methioinine and threonine, the latter of which is a precursor to isoleucine. This Trichophyton rubrum (strain ATCC MYA-4607 / CBS 118892) (Athlete's foot fungus) protein is Aspartate-semialdehyde dehydrogenase.